The chain runs to 59 residues: Large ribosomal subunit protein bL32B (59 aa).

The protein belongs to the bacterial ribosomal protein bL32 family.

The polypeptide is Large ribosomal subunit protein bL32B (rpmF2) (Enterococcus faecalis (strain ATCC 700802 / V583)).